Here is a 117-residue protein sequence, read N- to C-terminus: Putative membrane protein insertion efficiency factor (117 aa).

The protein belongs to the UPF0161 family.

It localises to the cell inner membrane. Could be involved in insertion of integral membrane proteins into the membrane. In Bartonella quintana (strain Toulouse) (Rochalimaea quintana), this protein is Putative membrane protein insertion efficiency factor.